Consider the following 282-residue polypeptide: Trans,polycis-polyprenyl diphosphate synthase ((2Z,6E)-farnesyl diphosphate specific) (282 aa).

The interval 1–30 is disordered; that stretch reads MSPKTVFSTDTHREPIPPQPHPSGARPPQL. Aspartate 44 is a catalytic residue. A Mg(2+)-binding site is contributed by aspartate 44. Substrate contacts are provided by residues 45 to 48, tryptophan 49, arginine 57, histidine 61, and 89 to 91; these read GNGR and STE. The Proton acceptor role is filled by asparagine 92. Residues tryptophan 93, arginine 95, arginine 212, and 218–220 contribute to the substrate site; that span reads RLS. Residue glutamate 231 participates in Mg(2+) binding. The disordered stretch occupies residues 262–282; the sequence is GGAEPNPVGPPQSAAGAQGQD.

The protein belongs to the UPP synthase family. In terms of assembly, homodimer. It depends on Mg(2+) as a cofactor.

It carries out the reaction (2Z,6E)-farnesyl diphosphate + 10 isopentenyl diphosphate = di-trans,deca-cis-tridecaprenyl diphosphate + 10 diphosphate. The enzyme catalyses (2Z,6E)-farnesyl diphosphate + 11 isopentenyl diphosphate = di-trans,undeca-cis-tetradecaprenyl diphosphate + 11 diphosphate. It catalyses the reaction (2Z,6E)-farnesyl diphosphate + 9 isopentenyl diphosphate = di-trans,nona-cis-dodecaprenyl diphosphate + 9 diphosphate. Its function is as follows. Catalyzes the synthesis of Z,E-mixed prenyl diphosphates by a condensation of isopentenyl diphosphate to an allylic diphosphate. It shows a large substrate specificity accepting dimethylallyl diphosphate (DMAPP), GPP, E,Efarnesyl diphosphate (FPP), E,E,E-geranylgeranyl diphosphate (GGPP), neryl diphosphate (Z-GPP), and (2Z,6E)-farnesyl diphosphate (Z,E-FPP) as allylic substrates. The enzyme exhibits the highest activity when Z,E-FPP is employed as an allylic substrate. The major product is dodecaprenyl diphosphate (C60) under every allylic substrate conditions, but the enzyme is also able to synthesize even C70 prenyl diphosphate as the maximum chain-length product. The chain is Trans,polycis-polyprenyl diphosphate synthase ((2Z,6E)-farnesyl diphosphate specific) from Thermobifida fusca (strain YX).